A 2491-amino-acid polypeptide reads, in one-letter code: MGAAAGRSPHLGPAPARRPQRSLLLLQLLLLVAAPGSTQAQAAPFPELCSYTWEAVDTKNNVLYKINICGSVDIVQCGPSSAVCMHDLKTRTYHSVGDSVLRSATRSLLEFNTTVSCDQQGTNHRVQSSIAFLCGKTLGTPEFVTATECVHYFEWRTTAACKKDIFKANKEVPCYVFDEELRKHDLNPLIKLSGAYLVDDSDPDTSLFINVCRDIDTLRDPGSQLRACPPGTAACLVRGHQAFDVGQPRDGLKLVRKDRLVLSYVREEAGKLDFCDGHSPAVTITFVCPSERREGTIPKLTAKSNCRYEIEWITEYACHRDYLESKTCSLSGEQQDVSIDLTPLAQSGGSSYISDGKEYLFYLNVCGETEIQFCNKKQAAVCQVKKSDTSQVKAAGRYHNQTLRYSDGDLTLIYFGGDECSSGFQRMSVINFECNKTAGNDGKGTPVFTGEVDCTYFFTWDTEYACVKEKEDLLCGATDGKKRYDLSALVRHAEPEQNWEAVDGSQTETEKKHFFINICHRVLQEGKARGCPEDAAVCAVDKNGSKNLGKFISSPMKEKGNIQLSYSDGDDCGHGKKIKTNITLVCKPGDLESAPVLRTSGEGGCFYEFEWHTAAACVLSKTEGENCTVFDSQAGFSFDLSPLTKKNGAYKVETKKYDFYINVCGPVSVSPCQPDSGACQVAKSDEKTWNLGLSNAKLSYYDGMIQLNYRGGTPYNNERHTPRATLITFLCDRDAGVGFPEYQEEDNSTYNFRWYTSYACPEEPLECVVTDPSTLEQYDLSSLAKSEGGLGGNWYAMDNSGEHVTWRKYYINVCRPLNPVPGCNRYASACQMKYEKDQGSFTEVVSISNLGMAKTGPVVEDSGSLLLEYVNGSACTTSDGRQTTYTTRIHLVCSRGRLNSHPIFSLNWECVVSFLWNTEAACPIQTTTDTDQACSIRDPNSGFVFNLNPLNSSQGYNVSGIGKIFMFNVCGTMPVCGTILGKPASGCEAETQTEELKNWKPARPVGIEKSLQLSTEGFITLTYKGPLSAKGTADAFIVRFVCNDDVYSGPLKFLHQDIDSGQGIRNTYFEFETALACVPSPVDCQVTDLAGNEYDLTGLSTVRKPWTAVDTSVDGRKRTFYLSVCNPLPYIPGCQGSAVGSCLVSEGNSWNLGVVQMSPQAAANGSLSIMYVNGDKCGNQRFSTRITFECAQISGSPAFQLQDGCEYVFIWRTVEACPVVRVEGDNCEVKDPRHGNLYDLKPLGLNDTIVSAGEYTYYFRVCGKLSSDVCPTSDKSKVVSSCQEKREPQGFHKVAGLLTQKLTYENGLLKMNFTGGDTCHKVYQRSTAIFFYCDRGTQRPVFLKETSDCSYLFEWRTQYACPPFDLTECSFKDGAGNSFDLSSLSRYSDNWEAITGTGDPEHYLINVCKSLAPQAGTEPCPPEAAACLLGGSKPVNLGRVRDGPQWRDGIIVLKYVDGDLCPDGIRKKSTTIRFTCSESQVNSRPMFISAVEDCEYTFAWPTATACPMKSNEHDDCQVTNPSTGHLFDLSSLSGRAGFTAAYSEKGLVYMSICGENENCPPGVGACFGQTRISVGKANKRLRYVDQVLQLVYKDGSPCPSKSGLSYKSVISFVCRPEARPTNRPMLISLDKQTCTLFFSWHTPLACEQATECSVRNGSSIVDLSPLIHRTGGYEAYDESEDDASDTNPDFYINICQPLNPMHGVPCPAGAAVCKVPIDGPPIDIGRVAGPPILNPIANEIYLNFESSTPCLADKHFNYTSLIAFHCKRGVSMGTPKLLRTSECDFVFEWETPVVCPDEVRMDGCTLTDEQLLYSFNLSSLSTSTFKVTRDSRTYSVGVCTFAVGPEQGGCKDGGVCLLSGTKGASFGRLQSMKLDYRHQDEAVVLSYVNGDRCPPETDDGVPCVFPFIFNGKSYEECIIESRAKLWCSTTADYDRDHEWGFCRHSNSYRTSSIIFKCDEDEDIGRPQVFSEVRGCDVTFEWKTKVVCPPKKLECKFVQKHKTYDLRLLSSLTGSWSLVHNGVSYYINLCQKIYKGPLGCSERASICRRTTTGDVQVLGLVHTQKLGVIGDKVVVTYSKGYPCGGNKTASSVIELTCTKTVGRPAFKRFDIDSCTYYFSWDSRAACAVKPQEVQMVNGTITNPINGKSFSLGDIYFKLFRASGDMRTNGDNYLYEIQLSSITSSRNPACSGANICQVKPNDQHFSRKVGTSDKTKYYLQDGDLDVVFASSSKCGKDKTKSVSSTIFFHCDPLVEDGIPEFSHETADCQYLFSWYTSAVCPLGVGFDSENPGDDGQMHKGLSERSQAVGAVLSLLLVALTCCLLALLLYKKERRETVISKLTTCCRRSSNVSYKYSKVNKEEETDENETEWLMEEIQLPPPRQGKEGQENGHITTKSVKALSSLHGDDQDSEDEVLTIPEVKVHSGRGAGAESSHPVRNAQSNALQEREDDRVGLVRGEKARKGKSSSAQQKTVSSTKLVSFHDDSDEDLLHI.

Residues 1–40 (MGAAAGRSPHLGPAPARRPQRSLLLLQLLLLVAAPGSTQA) form the signal peptide. Topologically, residues 41–2304 (QAAPFPELCS…MHKGLSERSQ (2264 aa)) are lumenal. MRH domains lie at 47 to 163 (ELCS…ACKK), 172 to 320 (VPCY…ACHR), 326 to 468 (KTCS…ACVK), 473 to 619 (LLCG…ACVL), 625 to 762 (ENCT…ACPE), 765 to 924 (LECV…ACPI), 932 to 1079 (QACS…ACVP), 1082 to 1219 (VDCQ…ACPV), 1225 to 1363 (DNCE…ACPP), 1367 to 1508 (TECS…ACPM), 1514 to 1648 (DDCQ…ACEQ), and 1650 to 1797 (TECS…VCPD). 2 disulfides stabilise this stretch: cysteine 49–cysteine 69 and cysteine 77–cysteine 84. A glycan (N-linked (GlcNAc...) asparagine) is linked at asparagine 112. 8 cysteine pairs are disulfide-bonded: cysteine 117–cysteine 149, cysteine 134–cysteine 161, cysteine 174–cysteine 212, cysteine 228–cysteine 235, cysteine 275–cysteine 306, cysteine 288–cysteine 318, cysteine 328–cysteine 366, and cysteine 374–cysteine 382. Residues asparagine 400 and asparagine 435 are each glycosylated (N-linked (GlcNAc...) asparagine). Disulfide bonds link cysteine 420-cysteine 454, cysteine 434-cysteine 466, cysteine 475-cysteine 519, and cysteine 531-cysteine 538. N-linked (GlcNAc...) asparagine glycosylation is found at asparagine 543 and asparagine 581. 2 cysteine pairs are disulfide-bonded: cysteine 572–cysteine 605 and cysteine 586–cysteine 617. The N-linked (GlcNAc...) asparagine glycan is linked to asparagine 626. 5 disulfides stabilise this stretch: cysteine 627/cysteine 664, cysteine 672/cysteine 679, cysteine 731/cysteine 760, cysteine 767/cysteine 814, and cysteine 823/cysteine 830. N-linked (GlcNAc...) asparagine glycosylation is present at asparagine 747. Asparagine 871 carries N-linked (GlcNAc...) asparagine glycosylation. 7 cysteine pairs are disulfide-bonded: cysteine 875/cysteine 910, cysteine 893/cysteine 922, cysteine 934/cysteine 970, cysteine 976/cysteine 987, cysteine 1042/cysteine 1077, cysteine 1084/cysteine 1125, and cysteine 1134/cysteine 1142. Residues asparagine 951 and asparagine 957 are each glycosylated (N-linked (GlcNAc...) asparagine). The N-linked (GlcNAc...) asparagine glycan is linked to asparagine 1164. Cystine bridges form between cysteine 1177–cysteine 1205, cysteine 1190–cysteine 1217, cysteine 1227–cysteine 1262, and cysteine 1270–cysteine 1282. Asparagine 1246 carries an N-linked (GlcNAc...) asparagine glycan. The N-linked (GlcNAc...) asparagine glycan is linked to asparagine 1312. 24 disulfides stabilise this stretch: cysteine 1319-cysteine 1349, cysteine 1333-cysteine 1361, cysteine 1369-cysteine 1408, cysteine 1420-cysteine 1427, cysteine 1461-cysteine 1494, cysteine 1476-cysteine 1506, cysteine 1516-cysteine 1553, cysteine 1559-cysteine 1566, cysteine 1598-cysteine 1634, cysteine 1614-cysteine 1646, cysteine 1652-cysteine 1695, cysteine 1706-cysteine 1713, cysteine 1750-cysteine 1783, cysteine 1766-cysteine 1795, cysteine 1804-cysteine 1839, cysteine 1850-cysteine 1856, cysteine 1893-cysteine 1975, cysteine 1903-cysteine 1927, cysteine 1917-cysteine 1942, cysteine 1957-cysteine 1987, cysteine 1994-cysteine 2029, cysteine 2039-cysteine 2046, cysteine 2082-cysteine 2113, and cysteine 2096-cysteine 2125. The N-linked (GlcNAc...) asparagine glycan is linked to asparagine 1656. The N-linked (GlcNAc...) asparagine glycan is linked to asparagine 1757. The 188-residue stretch at 1802-1989 (DGCTLTDEQL…EWKTKVVCPP (188 aa)) folds into the Fibronectin type-II domain. Asparagine 1816 is a glycosylation site (N-linked (GlcNAc...) asparagine). MRH domains are found at residues 1992-2127 (LECK…ACAV) and 2135-2280 (VNGT…VCPL). Residue asparagine 2085 is glycosylated (N-linked (GlcNAc...) asparagine). An N-linked (GlcNAc...) asparagine glycan is attached at asparagine 2136. 3 disulfides stabilise this stretch: cysteine 2188–cysteine 2194, cysteine 2232–cysteine 2266, and cysteine 2248–cysteine 2278. The helical transmembrane segment at 2305–2327 (AVGAVLSLLLVALTCCLLALLLY) threads the bilayer. Residues 2328 to 2491 (KKERRETVIS…DDSDEDLLHI (164 aa)) are Cytoplasmic-facing. Lysine 2352 is modified (N6-acetyllysine). At serine 2409 the chain carries Phosphoserine. Positions 2424–2491 (GRGAGAESSH…DDSDEDLLHI (68 aa)) are disordered. Arginine 2425 is modified (omega-N-methylarginine). Residues 2444–2459 (QEREDDRVGLVRGEKA) show a composition bias toward basic and acidic residues. Over residues 2464–2477 (SSSAQQKTVSSTKL) the composition is skewed to polar residues. A phosphoserine mark is found at serine 2479 and serine 2484. Basic and acidic residues predominate over residues 2479-2491 (SFHDDSDEDLLHI).

The protein belongs to the MRL1/IGF2R family. In terms of assembly, binds HA-I and HA-II plasma membrane adapters. Interacts with DPP4; the interaction is direct. Binds GGA1, GGA2 and GGA3. Interacts with the heterotrimeric retromer cargo-selective complex (CSC), formed by VPS26 (VPS26A or VPS26B), VPS29 and VPS35; which is involved in retrograde trafficking of the receptor from endosomes to the Golgi apparatus. Post-translationally, palmitoylated. Undergoes cysteine S-palmitoylation which promotes interaction with the retromer cargo-selective complex which mediates its retrograde trafficking to the Golgi apparatus.

It is found in the golgi apparatus membrane. Its subcellular location is the endosome membrane. Mediates the transport of phosphorylated lysosomal enzymes from the Golgi complex and the cell surface to lysosomes. Lysosomal enzymes bearing phosphomannosyl residues bind specifically to mannose-6-phosphate receptors in the Golgi apparatus and the resulting receptor-ligand complex is transported to an acidic prelysosomal compartment where the low pH mediates the dissociation of the complex. The receptor is then recycled back to the Golgi for another round of trafficking through its binding to the retromer. This receptor also binds IGF2. Acts as a positive regulator of T-cell coactivation by binding DPP4. The sequence is that of Cation-independent mannose-6-phosphate receptor (IGF2R) from Homo sapiens (Human).